A 73-amino-acid chain; its full sequence is Cytochrome b559 subunit alpha (73 aa).

Residues 21-35 traverse the membrane as a helical segment; the sequence is IIHSITVPSLFIAGW. Position 23 (H23) interacts with heme.

It belongs to the PsbE/PsbF family. As to quaternary structure, heterodimer of an alpha subunit and a beta subunit. PSII is composed of 1 copy each of membrane proteins PsbA, PsbB, PsbC, PsbD, PsbE, PsbF, PsbH, PsbI, PsbJ, PsbK, PsbL, PsbM, PsbT, PsbY, PsbZ, Psb30/Ycf12, at least 3 peripheral proteins of the oxygen-evolving complex and a large number of cofactors. It forms dimeric complexes. It depends on heme b as a cofactor.

The protein resides in the plastid. It localises to the chloroplast thylakoid membrane. This b-type cytochrome is tightly associated with the reaction center of photosystem II (PSII). PSII is a light-driven water:plastoquinone oxidoreductase that uses light energy to abstract electrons from H(2)O, generating O(2) and a proton gradient subsequently used for ATP formation. It consists of a core antenna complex that captures photons, and an electron transfer chain that converts photonic excitation into a charge separation. This Bigelowiella natans (Pedinomonas minutissima) protein is Cytochrome b559 subunit alpha.